The sequence spans 657 residues: WD repeat-containing protein 70 (657 aa).

Disordered regions lie at residues 1–21 (MEHS…DPQL) and 43–172 (FEQT…PVQR). Residues 45–78 (QTRRTAVERSRKTLEAREKEEEMNREKELRKQIE) are compositionally biased toward basic and acidic residues. Low complexity predominate over residues 82-105 (PAPSSSSAARERSQSSCRDTSSSD). 2 stretches are compositionally biased toward acidic residues: residues 106–119 (SESD…DDEL) and 150–168 (EEGE…EEDN). WD repeat units lie at residues 183–222 (HGTK…ASFK), 230–271 (CECH…ECIK), 284–324 (GHTA…KQKS), 333–372 (GKKV…HPKF), 379–418 (DPGT…KPLF), 424–469 (PTLF…RVYE), and 472–511 (ITDA…QRGA). Residue lysine 299 forms a Glycyl lysine isopeptide (Lys-Gly) (interchain with G-Cter in SUMO2) linkage. Lysine 455 is modified (N6-acetyllysine). Residues 543–568 (REPRQRSTRKQLEKDRLDPLKSHKPE) are compositionally biased toward basic and acidic residues. The disordered stretch occupies residues 543–584 (REPRQRSTRKQLEKDRLDPLKSHKPEPPVAGPGRGGRVGTHG). The segment covering 574 to 584 (PGRGGRVGTHG) has biased composition (gly residues). Residue threonine 582 is modified to Phosphothreonine. Glycyl lysine isopeptide (Lys-Gly) (interchain with G-Cter in SUMO2) cross-links involve residues lysine 593 and lysine 599. A phosphoserine mark is found at serine 624 and serine 641. Positions 634–657 (TMFAQVESDDEESKNEPEWKKRKI) are disordered. The segment covering 647–657 (KNEPEWKKRKI) has biased composition (basic and acidic residues).

It belongs to the WD repeat GAD-1 family.

In Mus musculus (Mouse), this protein is WD repeat-containing protein 70 (Wdr70).